A 454-amino-acid polypeptide reads, in one-letter code: MYSSSREEAVAAFDNLDTALNRVLKVSPDDLTIPECLAMLQRCEKIRRRLPAAEHPFINKLADQTDQTELGGKLPFALAERLHISRGEASRRIHEAADLGPRRTLTGQPLPPLLTATAAAQRAGHLGPAHVQVIRCFLHQLPHHVDLPTREKAEAELATLGGRFRPDQLHKLATKLADCLNPDGNYNDTDRARRRSIILGNQGPDGMSAISGYLTPEARATVDAVLAKLAAPGMANPADDTPCLAGTPSQAAIEADTRSAGQRHHDGLLAALRALLCSGELGQHNGLPAAIIVSTSLTELQSRAGHALTGGGTLLPMSDVIRLASHANHYLRIFDHGRELALYHTKRLASPGQRIVLYAKDRGCSFPNCDVPGYLTEVHHVTDFAQCQETDINELTQGCGPHHQLATTGGWITRKRKDGTTEWLPPAHLDHGQPRTNSYFHPEKLLHDSDEDDP.

The interval 422–454 (EWLPPAHLDHGQPRTNSYFHPEKLLHDSDEDDP) is disordered.

This sequence belongs to the Rv1128c/1148c/1588c/1702c/1945/3466 family.

This is an uncharacterized protein from Mycobacterium tuberculosis (strain CDC 1551 / Oshkosh).